The sequence spans 473 residues: H(+)/Cl(-) exchange transporter ClcA (473 aa).

The Cytoplasmic segment spans residues 1–32; sequence MKTDTSTFLAQQIVRLRRRDQIRRLMQRDKTP. Residues 33–69 form a helical membrane-spanning segment; it reads LAILFMAAVVGTLTGLVGVAFEKTVSWVQNMRIGALV. Topologically, residues 70–76 are periplasmic; it reads QVADHAF. Residues 77–100 traverse the membrane as a helical segment; the sequence is LLWPLAFILSALLAMVGYFLVRKF. The Selectivity filter part_1 signature appears at 106–110; the sequence is GSGIP. S107 serves as a coordination point for chloride. The helical intramembrane region spans 109–116; it reads IPEIEGAL. Topologically, residues 117 to 123 are cytoplasmic; that stretch reads EELRPVR. Transmembrane regions (helical) follow at residues 124–141 and 148–166; these read WWRV…TLGA and EGPT…LDVF. The Selectivity filter part_2 signature appears at 146 to 150; it reads GREGP. At 167–176 the chain is on the cytoplasmic side; the sequence is RMRSAEARHT. Intramembrane regions (helical) lie at residues 177-189 and 193-201; these read LLAT…LSAA and PLAGILFII. Residues 202–214 lie on the Cytoplasmic side of the membrane; that stretch reads EEMRPQFRYNLIS. The chain crosses the membrane as a helical span at residues 215–232; it reads IKAVFTGVIMSSIVFRIF. Topologically, residues 233-252 are periplasmic; sequence NGEAPIIEVGKLSDAPVNTL. Residues 253-281 form a helical membrane-spanning segment; that stretch reads WLYLILGIIFGCVGPVFNSLVLRTQDMFQ. Residues 282 to 287 are Cytoplasmic-facing; it reads RFHGGE. Residues 288–309 form a helical membrane-spanning segment; it reads IKKWVLMGGAIGGLCGILGLIE. The Periplasmic segment spans residues 310–329; sequence PAAAGGGFNLIPIAAAGNFS. Transmembrane regions (helical) follow at residues 330 to 349 and 355 to 376; these read VGLL…LCFS and GIFA…MAAA. Positions 355-359 match the Selectivity filter part_3 motif; the sequence is GIFAP. Positions 356 and 357 each coordinate chloride. At 377–386 the chain is on the periplasmic side; it reads VLFPQYHPEA. An intramembrane region (helical) is located at residues 387 to 401; sequence GTFAIAGMGALMAAS. Positions 402–404 form an intramembrane region, note=Loop between two helices; the sequence is VRA. Positions 405–416 form an intramembrane region, helical; the sequence is PLTGIVLVLEMT. Residues 417–421 constitute an intramembrane region (note=Loop between two helices); the sequence is DNYQL. The helical transmembrane segment at 422 to 438 threads the bilayer; the sequence is ILPMIITCLGATLLAQF. Residues 439 to 473 are Cytoplasmic-facing; it reads LGGKPLYSTILARTLAKQDAEQAAKNQNAPAGENT. Chloride is bound at residue Y445.

Belongs to the chloride channel (TC 2.A.49) family. ClcA subfamily. As to quaternary structure, homodimer.

It localises to the cell inner membrane. The enzyme catalyses 2 chloride(in) + H(+)(out) = 2 chloride(out) + H(+)(in). Its function is as follows. Proton-coupled chloride transporter. Functions as antiport system and exchanges two chloride ions for 1 proton. Probably acts as an electrical shunt for an outwardly-directed proton pump that is linked to amino acid decarboxylation, as part of the extreme acid resistance (XAR) response. This Salmonella paratyphi A (strain AKU_12601) protein is H(+)/Cl(-) exchange transporter ClcA.